Consider the following 474-residue polypeptide: 3-isopropylmalate dehydratase large subunit (474 aa).

Residues 293–313 form a disordered region; the sequence is GTTPGQGIGITEEIPAPEDLP. [4Fe-4S] cluster is bound by residues Cys348, Cys408, and Cys411.

This sequence belongs to the aconitase/IPM isomerase family. LeuC type 1 subfamily. In terms of assembly, heterodimer of LeuC and LeuD. [4Fe-4S] cluster serves as cofactor.

The enzyme catalyses (2R,3S)-3-isopropylmalate = (2S)-2-isopropylmalate. The protein operates within amino-acid biosynthesis; L-leucine biosynthesis; L-leucine from 3-methyl-2-oxobutanoate: step 2/4. Catalyzes the isomerization between 2-isopropylmalate and 3-isopropylmalate, via the formation of 2-isopropylmaleate. The polypeptide is 3-isopropylmalate dehydratase large subunit (Natronomonas pharaonis (strain ATCC 35678 / DSM 2160 / CIP 103997 / JCM 8858 / NBRC 14720 / NCIMB 2260 / Gabara) (Halobacterium pharaonis)).